The primary structure comprises 496 residues: Glycerol kinase (496 aa).

Position 12 (Thr-12) interacts with ADP. Residues Thr-12, Thr-13, and Ser-14 each contribute to the ATP site. Sn-glycerol 3-phosphate is bound at residue Thr-12. Arg-16 serves as a coordination point for ADP. Arg-82, Glu-83, and Tyr-134 together coordinate sn-glycerol 3-phosphate. The glycerol site is built by Arg-82, Glu-83, and Tyr-134. His-230 bears the Phosphohistidine; by HPr mark. Sn-glycerol 3-phosphate is bound at residue Asp-244. Glycerol-binding residues include Asp-244 and Gln-245. The ADP site is built by Thr-266 and Gly-309. ATP-binding residues include Thr-266, Gly-309, Gln-313, and Gly-410. Residues Gly-410 and Asn-414 each coordinate ADP.

Belongs to the FGGY kinase family. Homotetramer and homodimer (in equilibrium). The phosphoenolpyruvate-dependent sugar phosphotransferase system (PTS), including enzyme I, and histidine-containing protein (HPr) are required for the phosphorylation, which leads to the activation of the enzyme.

The enzyme catalyses glycerol + ATP = sn-glycerol 3-phosphate + ADP + H(+). It participates in polyol metabolism; glycerol degradation via glycerol kinase pathway; sn-glycerol 3-phosphate from glycerol: step 1/1. Its activity is regulated as follows. Activated by phosphorylation and inhibited by fructose 1,6-bisphosphate (FBP). Its function is as follows. Key enzyme in the regulation of glycerol uptake and metabolism. Catalyzes the phosphorylation of glycerol to yield sn-glycerol 3-phosphate. The polypeptide is Glycerol kinase (Bacillus velezensis (strain DSM 23117 / BGSC 10A6 / LMG 26770 / FZB42) (Bacillus amyloliquefaciens subsp. plantarum)).